A 255-amino-acid chain; its full sequence is Homeobox-leucine zipper protein ATHB-23 (255 aa).

The segment at residues 68 to 127 (MGEKKRRLNMEQLKALEKDFELGNKLESDRKLELARALGLQPRQIAIWFQNRRARSKTKQ) is a DNA-binding region (homeobox). The tract at residues 128 to 163 (LEKDYDMLKRQFESLRDENEVLQTQNQKLQAQVMAL) is leucine-zipper.

It belongs to the HD-ZIP homeobox family. Class I subfamily. In terms of tissue distribution, expressed in young leaves, in the adaxial domain of leaf primordia and the rib meristem. Expressed in the styles of flowers and siliques.

It localises to the nucleus. Probable transcription factor. This chain is Homeobox-leucine zipper protein ATHB-23 (ATHB-23), found in Arabidopsis thaliana (Mouse-ear cress).